The chain runs to 167 residues: MASVTSATVAIPSFTGLKASTIKSSATVRIQTAAVASPKLTVKSSLKNFGVAAVAAAASIALAGNAMAIEVLLGGGDGSLAFIPNDFSIAKGEKIVFKNNAGYPHNVVFDEDEIPSGVDVAKISMDEQDLLNGAGETYEVALTEPGTYSFYCAPHQGAGMVGKVTVN.

A chloroplast-targeting transit peptide spans 1–52 (MASVTSATVAIPSFTGLKASTIKSSATVRIQTAAVASPKLTVKSSLKNFGVA). The transit peptide at 53-68 (AVAAAASIALAGNAMA) directs the protein to the thylakoid. The Plastocyanin-like domain occupies 69 to 167 (IEVLLGGGDG…AGMVGKVTVN (99 aa)). Positions 105, 152, 155, and 160 each coordinate Cu cation.

The protein belongs to the plastocyanin family. Cu(2+) serves as cofactor.

It is found in the plastid. It localises to the chloroplast thylakoid membrane. Participates in electron transfer between P700 and the cytochrome b6-f complex in photosystem I. Seems to be the major plastocyanin in Arabidopsis. The chain is Plastocyanin major isoform, chloroplastic (DRT112) from Arabidopsis thaliana (Mouse-ear cress).